A 483-amino-acid chain; its full sequence is 5-hydroxytryptamine receptor 3A (483 aa).

Residues 1 to 23 form the signal peptide; that stretch reads MPLCIPQVLLALFLSVLIAQGEG. Over 24-246 the chain is Extracellular; that stretch reads SRRRATQAHS…MKFYVVIRRR (223 aa). N-linked (GlcNAc...) asparagine glycosylation is found at N109, N175, and N191. An intrachain disulfide couples C162 to C176. Residues 247 to 273 traverse the membrane as a helical segment; the sequence is PLFYAVSLLLPSIFLMVVDIVGFCLPP. Topologically, residues 274–278 are cytoplasmic; that stretch reads DSGER. Residues 279-297 traverse the membrane as a helical segment; it reads VSFKITLLLGYSVFLIIVS. The Extracellular segment spans residues 298–307; it reads DTLPATAIGT. Residues 308-326 traverse the membrane as a helical segment; it reads PLIGVYFVVCMALLVISLA. At 327–460 the chain is on the cytoplasmic side; that stretch reads ETIFIVQLVH…GYVLDRLLFR (134 aa). The segment at 393–414 is disordered; the sequence is VGSPQDLEKTSRSRDSPLPPPR. A compositionally biased stretch (basic and acidic residues) spans 398-407; that stretch reads DLEKTSRSRD. Residues 419 to 455 form an HA-stretch; determines single-channel conductance in 5-HT3 receptors region; the sequence is AVRGLLQELSSIRHSLEKRDEMREVARDWLRVGYVLD. A helical transmembrane segment spans residues 461 to 480; the sequence is IYLLAVLAYSITLVTLWSIW. The Extracellular portion of the chain corresponds to 481 to 483; that stretch reads HYS.

This sequence belongs to the ligand-gated ion channel (TC 1.A.9) family. 5-hydroxytryptamine receptor (TC 1.A.9.2) subfamily. HTR3A sub-subfamily. As to quaternary structure, forms homopentameric as well as heteropentameric serotonin-activated cation-selective channel complexes with HTR3B or HTR3C or HTR3D or HTR3E. The homomeric complex is functional but exhibits low conductance with modified voltage dependence, and decreased agonist and antagonist affinity. Heteropentameric complexes display properties which resemble that of neuronal serotonin-activated channels in vivo. Interacts with RIC3. As to expression, expressed in central and peripheral neurons.

It is found in the postsynaptic cell membrane. Its subcellular location is the cell membrane. The catalysed reaction is Na(+)(in) = Na(+)(out). It catalyses the reaction K(+)(in) = K(+)(out). It carries out the reaction Ca(2+)(in) = Ca(2+)(out). The enzyme catalyses Mg(2+)(in) = Mg(2+)(out). Forms serotonin (5-hydroxytryptamine/5-HT3)-activated cation-selective channel complexes, which when activated cause fast, depolarizing responses in neurons. This Rattus norvegicus (Rat) protein is 5-hydroxytryptamine receptor 3A.